The sequence spans 405 residues: Phosphopentomutase (405 aa).

The Mn(2+) site is built by D10, D303, H308, D344, H345, and H356.

This sequence belongs to the phosphopentomutase family. It depends on Mn(2+) as a cofactor.

It is found in the cytoplasm. The catalysed reaction is 2-deoxy-alpha-D-ribose 1-phosphate = 2-deoxy-D-ribose 5-phosphate. It catalyses the reaction alpha-D-ribose 1-phosphate = D-ribose 5-phosphate. It functions in the pathway carbohydrate degradation; 2-deoxy-D-ribose 1-phosphate degradation; D-glyceraldehyde 3-phosphate and acetaldehyde from 2-deoxy-alpha-D-ribose 1-phosphate: step 1/2. Functionally, isomerase that catalyzes the conversion of deoxy-ribose 1-phosphate (dRib-1-P) and ribose 1-phosphate (Rib-1-P) to deoxy-ribose 5-phosphate (dRib-5-P) and ribose 5-phosphate (Rib-5-P), respectively. The protein is Phosphopentomutase of Shewanella loihica (strain ATCC BAA-1088 / PV-4).